The following is a 202-amino-acid chain: Recombination protein RecR (202 aa).

The C4-type zinc finger occupies 61 to 76 (CARCNSFTEDEVCATC). The 96-residue stretch at 84 to 179 (GLLCIVETPA…KVTRLARGVP (96 aa)) folds into the Toprim domain.

Belongs to the RecR family.

May play a role in DNA repair. It seems to be involved in an RecBC-independent recombinational process of DNA repair. It may act with RecF and RecO. This chain is Recombination protein RecR, found in Bordetella pertussis (strain Tohama I / ATCC BAA-589 / NCTC 13251).